A 524-amino-acid chain; its full sequence is Tyrosine-protein kinase HCK (524 aa).

Disordered regions lie at residues 1 to 20 (MGGR…GRVP) and 35 to 71 (KASK…LPPG). G2 is lipidated: N-myristoyl glycine. A lipid anchor (S-palmitoyl cysteine) is attached at G3. Y50 carries the phosphotyrosine; by autocatalysis modification. The region spanning 76-136 (SEDTIVVALY…PSNYVARVNS (61 aa)) is the SH3 domain. The region spanning 142-239 (WFFKGISRKD…GLCQKLSVPC (98 aa)) is the SH2 domain. T200 is modified (phosphothreonine). Residue Y207 is modified to Phosphotyrosine. Residues 260–513 (LQMEKKLGAG…YIQSVLDDFY (254 aa)) form the Protein kinase domain. ATP-binding positions include 266-274 (LGAGQFGEV) and K288. Catalysis depends on D379, which acts as the Proton acceptor. A Phosphotyrosine; by autocatalysis modification is found at Y409. A Phosphoserine modification is found at S460. The residue at position 520 (Y520) is a Phosphotyrosine.

It belongs to the protein kinase superfamily. Tyr protein kinase family. SRC subfamily. As to quaternary structure, interacts with ADAM15. Interacts with FASLG. Interacts with ARRB1 and ARRB2. Interacts with FCGR1A; the interaction may be indirect. Interacts with IL6ST. Interacts (via SH3 domain) with ELMO1. Interacts (via SH3 domain) with TP73. Interacts with YAP1. Interacts with ABL1 and ITGB1, and thereby recruits ABL1 to activated ITGB1. Interacts (via SH2 domain) with FLT3 (tyrosine phosphorylated). Interacts with CBL. Interacts with VAV1, WAS and RAPGEF1. Interacts (via SH3 domain) with WDCP. Post-translationally, phosphorylated on several tyrosine residues. Autophosphorylated. Becomes rapidly phosphorylated upon activation of the immunoglobulin receptors FCGR1A and FCGR2A. Phosphorylation at Tyr-409 increases kinase activity. Phosphorylation at Tyr-520 inhibits kinase activity. Kinase activity is not required for phosphorylation at Tyr-520, suggesting that this site may be a target of other kinases. Ubiquitinated by CBL, leading to its degradation via the proteasome. In terms of processing, isoform 2 palmitoylation at position 2 requires prior myristoylation. Palmitoylation at position 3 is required for caveolar localization of isoform 2. As to expression, expressed strongly in spleen and at very low levels in thymus.

It is found in the cytoplasmic vesicle. Its subcellular location is the secretory vesicle. The protein resides in the cytoplasm. The protein localises to the cytosol. It localises to the membrane. It is found in the caveola. Its subcellular location is the lysosome. The protein resides in the cell projection. The protein localises to the podosome membrane. It localises to the cell membrane. It is found in the cell junction. Its subcellular location is the focal adhesion. The protein resides in the cytoskeleton. The protein localises to the golgi apparatus. It localises to the nucleus. It catalyses the reaction L-tyrosyl-[protein] + ATP = O-phospho-L-tyrosyl-[protein] + ADP + H(+). Its activity is regulated as follows. Subject to autoinhibition, mediated by intramolecular interactions involving the SH2 and SH3 domains. Kinase activity is also regulated by phosphorylation at regulatory tyrosine residues. Phosphorylation at Tyr-409 is required for optimal activity. Phosphorylation at Tyr-520 inhibits kinase activity. In terms of biological role, non-receptor tyrosine-protein kinase found in hematopoietic cells that transmits signals from cell surface receptors and plays an important role in the regulation of innate immune responses, including neutrophil, monocyte, macrophage and mast cell functions, phagocytosis, cell survival and proliferation, cell adhesion and migration. Acts downstream of receptors that bind the Fc region of immunoglobulins, such as FCGR1A and FCGR2A, but also CSF3R, PLAUR, the receptors for IFNG, IL2, IL6 and IL8, and integrins, such as ITGB1 and ITGB2. During the phagocytic process, mediates mobilization of secretory lysosomes, degranulation, and activation of NADPH oxidase to bring about the respiratory burst. Plays a role in the release of inflammatory molecules. Promotes reorganization of the actin cytoskeleton and actin polymerization, formation of podosomes and cell protrusions. Inhibits TP73-mediated transcription activation and TP73-mediated apoptosis. Phosphorylates CBL in response to activation of immunoglobulin gamma Fc region receptors. Phosphorylates ADAM15, BCR, ELMO1, FCGR2A, GAB1, GAB2, RAPGEF1, STAT5B, TP73, VAV1 and WAS. The chain is Tyrosine-protein kinase HCK (Hck) from Rattus norvegicus (Rat).